A 430-amino-acid polypeptide reads, in one-letter code: L-lysine N6-monooxygenase MbtG (430 aa).

An N-terminal signal peptide occupies residues 1 to 21; that stretch reads MTATLAVIGAGPKAVAVAAKA.

Belongs to the lysine N(6)-hydroxylase/L-ornithine N(5)-oxygenase family. FAD serves as cofactor.

The enzyme catalyses L-lysine + NADPH + O2 = N(6)-hydroxy-L-lysine + NADP(+) + H2O. Its pathway is siderophore biosynthesis; mycobactin biosynthesis. Its function is as follows. Flavoprotein monooxygenase required for N-hydroxylation of the two acylated lysine residues during mycobactin assembly, thus producing the hydroxamate groups necessary for iron sequestration. Is also able, but less efficiently, to hydroxylate L-lysine (non acylated) in vitro. The chain is L-lysine N6-monooxygenase MbtG (mbtG) from Mycobacterium sp. (strain MCS).